The sequence spans 825 residues: Fibrous sheath CABYR-binding protein (825 aa).

Disordered stretches follow at residues 1 to 43 (MVGK…SYSA) and 113 to 139 (QDVE…RTGY). The segment covering 21–40 (KSSSPKATHRIGNTSGSKGS) has biased composition (polar residues). Residue Ser-160 is modified to Phosphoserine. Disordered regions lie at residues 168–232 (SRPD…LLED), 244–718 (QEGS…DKHS), and 732–751 (GEAS…EDEA). Positions 200–220 (PATNSNEEIGQKNISRTSFTQ) are enriched in polar residues. Residues 277–290 (ATAKAEPRPAEETH) are compositionally biased toward basic and acidic residues. 2 stretches are compositionally biased toward low complexity: residues 348 to 357 (AEILPPSAEE) and 398 to 407 (PLPAEGALEE). Over residues 610–676 (VQPPPAEEAP…PAEVQPPPAE (67 aa)) the composition is skewed to pro residues.

As to quaternary structure, interacts with CABYR. Interacts with ROPN1 and ROPN1L; the interaction increases upon spermatozoa capacitation conditions. Post-translationally, phosphorylated by PKA upon spermatozoa capacitation conditions.

It localises to the cell projection. It is found in the cilium. Its subcellular location is the flagellum. In terms of biological role, may be involved in the later stages of fibrous sheath biogenesis and spermatozoa capacitation. Inhibits ROPN1 and ROPN1L SUMOylation. Binds calcium. This chain is Fibrous sheath CABYR-binding protein (FSCB), found in Homo sapiens (Human).